The chain runs to 255 residues: Ribonuclease HII (255 aa).

Residues 58 to 247 (RYIAGIDEAG…VKSMVLGARY (190 aa)) enclose the RNase H type-2 domain. Residues D64, E65, and D156 each contribute to the a divalent metal cation site.

It belongs to the RNase HII family. Mn(2+) serves as cofactor. Mg(2+) is required as a cofactor.

It localises to the cytoplasm. The enzyme catalyses Endonucleolytic cleavage to 5'-phosphomonoester.. In terms of biological role, endonuclease that specifically degrades the RNA of RNA-DNA hybrids. The chain is Ribonuclease HII from Syntrophomonas wolfei subsp. wolfei (strain DSM 2245B / Goettingen).